Here is a 216-residue protein sequence, read N- to C-terminus: Refilin-B (216 aa).

The segment at 1–55 (MVGRLSLQDVPELVDTKKKGDGVLDSPDSGLPPSPSPSHWGLAATAGGGGERAPV) is disordered. Phosphoserine occurs at positions 6 and 26.

Belongs to the Refilin family. Interacts with FLNA and FLNB. As to expression, detected in various tissues, with highest expression in lung, followed by spleen.

The protein localises to the cytoplasm. Its subcellular location is the cytoskeleton. In terms of biological role, involved in the regulation of the perinuclear actin network and nuclear shape through interaction with filamins. Plays an essential role in the formation of cartilaginous skeletal elements. This Mus musculus (Mouse) protein is Refilin-B.